A 235-amino-acid chain; its full sequence is Sugar fermentation stimulation protein homolog (235 aa).

It belongs to the SfsA family.

This Nitrosococcus oceani (strain ATCC 19707 / BCRC 17464 / JCM 30415 / NCIMB 11848 / C-107) protein is Sugar fermentation stimulation protein homolog.